Consider the following 213-residue polypeptide: Glutathione S-transferase PARB (213 aa).

The 82-residue stretch at 1-82 (MAIKVHGSPM…YIAHVYADNG (82 aa)) folds into the GST N-terminal domain. Residues Ser-11, 12–13 (TA), 40–41 (HK), 53–54 (QV), and 66–67 (ES) contribute to the glutathione site. Residues 89 to 213 (DPKKMPSMSV…WVKGLEKLQK (125 aa)) form the GST C-terminal domain.

The protein belongs to the GST superfamily. Phi family.

The enzyme catalyses RX + glutathione = an S-substituted glutathione + a halide anion + H(+). Functionally, conjugation of reduced glutathione to a wide number of exogenous and endogenous hydrophobic electrophiles. This Nicotiana tabacum (Common tobacco) protein is Glutathione S-transferase PARB.